The following is a 934-amino-acid chain: Bifunctional uridylyltransferase/uridylyl-removing enzyme (934 aa).

The segment at 1–379 (MSAHDLKLEE…TFSRRKRKLS (379 aa)) is uridylyltransferase. Positions 380 to 736 (DDGAFISENH…AKPHAFEAVT (357 aa)) are uridylyl-removing. The region spanning 496–613 (VDEHLLRCIA…IDFADTVQTM (118 aa)) is the HD domain. 2 ACT domains span residues 737-818 (EITV…DMLA) and 848-931 (VIEV…RSPQ).

The protein belongs to the GlnD family. The cofactor is Mg(2+).

The catalysed reaction is [protein-PII]-L-tyrosine + UTP = [protein-PII]-uridylyl-L-tyrosine + diphosphate. It carries out the reaction [protein-PII]-uridylyl-L-tyrosine + H2O = [protein-PII]-L-tyrosine + UMP + H(+). Its activity is regulated as follows. Uridylyltransferase (UTase) activity is inhibited by glutamine, while glutamine activates uridylyl-removing (UR) activity. Its function is as follows. Modifies, by uridylylation and deuridylylation, the PII regulatory proteins (GlnB and homologs), in response to the nitrogen status of the cell that GlnD senses through the glutamine level. Under low glutamine levels, catalyzes the conversion of the PII proteins and UTP to PII-UMP and PPi, while under higher glutamine levels, GlnD hydrolyzes PII-UMP to PII and UMP (deuridylylation). Thus, controls uridylylation state and activity of the PII proteins, and plays an important role in the regulation of nitrogen assimilation and metabolism. The chain is Bifunctional uridylyltransferase/uridylyl-removing enzyme from Brucella ovis (strain ATCC 25840 / 63/290 / NCTC 10512).